Here is a 324-residue protein sequence, read N- to C-terminus: Dermonecrotic toxin Hl-PLD1 (324 aa).

The first 35 residues, 1-35 (MAHCYYNSKRGCNRVMKTVALVVLISTVMVEESRG), serve as a signal peptide directing secretion. His-50 is an active-site residue. Mg(2+) contacts are provided by Glu-70 and Asp-72. Residue His-86 is the Nucleophile of the active site. 2 disulfides stabilise this stretch: Cys-90/Cys-96 and Cys-92/Cys-236. Mg(2+) is bound at residue Asp-130.

Belongs to the arthropod phospholipase D family. Class II subfamily. Requires Mg(2+) as cofactor. In terms of tissue distribution, expressed by the venom gland.

It is found in the secreted. It catalyses the reaction an N-(acyl)-sphingosylphosphocholine = an N-(acyl)-sphingosyl-1,3-cyclic phosphate + choline. The enzyme catalyses an N-(acyl)-sphingosylphosphoethanolamine = an N-(acyl)-sphingosyl-1,3-cyclic phosphate + ethanolamine. The catalysed reaction is a 1-acyl-sn-glycero-3-phosphocholine = a 1-acyl-sn-glycero-2,3-cyclic phosphate + choline. It carries out the reaction a 1-acyl-sn-glycero-3-phosphoethanolamine = a 1-acyl-sn-glycero-2,3-cyclic phosphate + ethanolamine. Dermonecrotic toxins cleave the phosphodiester linkage between the phosphate and headgroup of certain phospholipids (sphingolipid and lysolipid substrates), forming an alcohol (often choline) and a cyclic phosphate. This toxin acts on sphingomyelin (SM) with a high activity. It may also act on ceramide phosphoethanolamine (CPE), lysophosphatidylcholine (LPC) and lysophosphatidylethanolamine (LPE), but not on lysophosphatidylserine (LPS), and lysophosphatidylglycerol (LPG). It acts by transphosphatidylation, releasing exclusively cyclic phosphate products as second products. In vivo, shows dermonecrotic activity when intradermally injected into rabbit skin and is lethal to mice. Induces increased vascular permeability, edema, inflammatory response, and platelet aggregation. Does not show hemolytic activity (at up to 50 ug). This chain is Dermonecrotic toxin Hl-PLD1, found in Hemiscorpius lepturus (Scorpion).